The sequence spans 533 residues: Glucose-6-phosphate isomerase (533 aa).

The active-site Proton donor is the Glu341. Active-site residues include His372 and Lys501.

It belongs to the GPI family.

It localises to the cytoplasm. It carries out the reaction alpha-D-glucose 6-phosphate = beta-D-fructose 6-phosphate. It participates in carbohydrate biosynthesis; gluconeogenesis. Its pathway is carbohydrate degradation; glycolysis; D-glyceraldehyde 3-phosphate and glycerone phosphate from D-glucose: step 2/4. In terms of biological role, catalyzes the reversible isomerization of glucose-6-phosphate to fructose-6-phosphate. This Cereibacter sphaeroides (strain ATCC 17025 / ATH 2.4.3) (Rhodobacter sphaeroides) protein is Glucose-6-phosphate isomerase.